An 840-amino-acid polypeptide reads, in one-letter code: Leucine-zipper-like transcriptional regulator 1 (840 aa).

N-acetylalanine is present on A2. 6 Kelch repeats span residues 79–128, 130–185, 187–238, 239–285, 295–341, and 399–450; these read AIYV…VYGS, MFVF…VYSD, LWIF…VCRD, KMFV…QRRY, HLYV…PERA, and AMYI…FVLG. BTB domains are found at residues 443 to 537 and 667 to 736; these read CDVE…KYPR and CDIT…NMPP.

This sequence belongs to the LZTR1 family. Homodimer. Component of the BCR(LZTR1) E3 ubiquitin ligase complex, at least composed of CUL3, LZTR1 and RBX1. Interacts with Ras (K-Ras/KRAS, N-Ras/NRAS and H-Ras/HRAS). Interacts with RAF1. Interacts with SHOC2. Interacts with PPP1CB. Post-translationally, phosphorylated on tyrosine upon induction of apoptosis, leading to its degradation by the proteasome.

It localises to the endomembrane system. The protein localises to the recycling endosome. Its subcellular location is the golgi apparatus. It participates in protein modification; protein ubiquitination. In terms of biological role, substrate-specific adapter of a BCR (BTB-CUL3-RBX1) E3 ubiquitin-protein ligase complex that mediates ubiquitination of Ras (K-Ras/KRAS, N-Ras/NRAS and H-Ras/HRAS). Is a negative regulator of RAS-MAPK signaling that acts by controlling Ras levels and decreasing Ras association with membranes. This Homo sapiens (Human) protein is Leucine-zipper-like transcriptional regulator 1.